A 354-amino-acid polypeptide reads, in one-letter code: Ferrochelatase (354 aa).

Fe cation contacts are provided by histidine 214 and glutamate 295.

This sequence belongs to the ferrochelatase family.

Its subcellular location is the cytoplasm. It catalyses the reaction heme b + 2 H(+) = protoporphyrin IX + Fe(2+). Its pathway is porphyrin-containing compound metabolism; protoheme biosynthesis; protoheme from protoporphyrin-IX: step 1/1. In terms of biological role, catalyzes the ferrous insertion into protoporphyrin IX. This Burkholderia lata (strain ATCC 17760 / DSM 23089 / LMG 22485 / NCIMB 9086 / R18194 / 383) protein is Ferrochelatase.